We begin with the raw amino-acid sequence, 350 residues long: Eukaryotic translation initiation factor 3 subunit I (350 aa).

WD repeat units follow at residues 8–49, 51–89, 91–135, 149–188, 198–240, and 296–335; these read GHER…GTLE, HQGV…CVYT, DSPS…ATLS, SEGS…LVTS, EKNV…KVYK, and GHFG…QDFL.

Belongs to the eIF-3 subunit I family. Component of the eukaryotic translation initiation factor 3 (eIF-3) complex.

The protein localises to the cytoplasm. Functionally, component of the eukaryotic translation initiation factor 3 (eIF-3) complex, which is involved in protein synthesis of a specialized repertoire of mRNAs and, together with other initiation factors, stimulates binding of mRNA and methionyl-tRNAi to the 40S ribosome. The eIF-3 complex specifically targets and initiates translation of a subset of mRNAs involved in cell proliferation. This chain is Eukaryotic translation initiation factor 3 subunit I, found in Candida albicans (strain SC5314 / ATCC MYA-2876) (Yeast).